Consider the following 574-residue polypeptide: MPRGLELLIAQTILQGFDAQYGRFLEVTSGAQQRFEQADWHAVQQAMKNRIHLYDHHVGLVVEQLRCITNGQSTDAAFLLRVKEHYTRLLPDYPRFEIAESFFNSVYCRLFDHRSLTPERLFIFSSQPERRFRTIPRPLAKDFHSDHGWESLLMRVISDLPLRLRWQNKSRDIHYIVRHLTETLGTDNLAESHLQVANELFYRNKAAWLVGKLITPSGTLPFLLPIHQTDDGELFIDTCLTTTAEASIVFGFARSYFMVYAPLPAALVEWLREILPGKTTAELYMAIGCQKHAKTESYREYLVYLQGCNEQFIEAPGIRGMVMLVFTLPGFDRVFKVIKDRFAPQKEMSAAHVCACYQLVKEHDRVGRMADTQEFENFVLEKRHISPALMELLLQEAAEKITDLGEQIVIRHLYIERRMVPLNIWLEQVEGQQLRDAIEEYGNAIRQLAAANIFPGDMLFKNFGVTRHGRVVFYDYDEICYMTEVNFRDIPPPRYPEDELASEPWYSVSPGDVFPEEFRHWLCADPRIGPLFEEMHADLFRADYWRALQNRIREGHVEDVYAYRRRQRFSVRFV.

ATP-binding positions include 315–321 (APGIRGM) and K336. The active site involves D371.

The protein belongs to the AceK family.

The protein localises to the cytoplasm. The catalysed reaction is L-seryl-[isocitrate dehydrogenase] + ATP = O-phospho-L-seryl-[isocitrate dehydrogenase] + ADP + H(+). Functionally, bifunctional enzyme which can phosphorylate or dephosphorylate isocitrate dehydrogenase (IDH) on a specific serine residue. This is a regulatory mechanism which enables bacteria to bypass the Krebs cycle via the glyoxylate shunt in response to the source of carbon. When bacteria are grown on glucose, IDH is fully active and unphosphorylated, but when grown on acetate or ethanol, the activity of IDH declines drastically concomitant with its phosphorylation. The sequence is that of Isocitrate dehydrogenase kinase/phosphatase from Escherichia coli (strain SMS-3-5 / SECEC).